The primary structure comprises 887 residues: MCAALRRNLLLRSLWVVLAIGTAQVQAASPRWEPQIAVLCEAGQIYQPQYLSEEGRWVTDLSKKTTGPTCLRDKMDLLDYCKKAYPNRDITNIVESSHYQKIGGWCRQGALNAAKCKGSHRWIKPFRCLGPFQSDALLVPEGCLFDHIHNASRCWPFVRWNQTGAAACQERGMQMRSFAMLLPCGISVFSGVEFVCCPKHFKTDEIHVKKTDLPVMPAAQINSANDELVMNDEDDSNDSNYSKDANEDDLDDEDDLMGDDEEDDMVADEAATAGGSPNTGSSGDSNSGSLDDINAEYDSGEEGDNYEEDGAGSESEAEVEASWDQSGGAKVVSLKSDSSSPSSAPVAPAPEKAPVKSESVTSTPQLSASAAAFVAANSGNSGTGAGAPPSTAQPTSDPYFTHFDPHYEHQSYKVSQKRLEESHREKVTRVMKDWSDLEEKYQDMRLADPKAAQSFKQRMTARFQTSVQALEEEGNAEKHQLAAMHQQRVLAHINQRKREAMTCYTQALTEQPPNAHHVEKCLQKLLRALHKDRAHALAHYRHLLNSGGPGGLEAAASERPRTLERLIDIDRAVNQSMTMLKRYPELSAKIAQLMNDYILALRSKDDIPGSSLGMSEEAEAGILDKYRVEIERKVAEKERLRLAEKQRKEQRAAEREKLREEKLRLEAKKVDDMLKSQVAEQQSQPTQSSTQSQAQQQQQEKSLPGKELGPDAALVTAANPNLETTKSEKDLSDTEYGEATVSSTKVQTVLPTVDDDAVQRAVEDVAAAVAHQEAEPQVQHFMTHDLGHRESSFSLRREFAQHAHAAKEGRNVYFTLSFAGIALMAAVFVGVAVAKWRTSRSPHAQGFIEVDQNVTTHHPIVREEKIVPNMQINGYENPTYKYFEVKE.

An N-terminal signal peptide occupies residues 1–27 (MCAALRRNLLLRSLWVVLAIGTAQVQA). Residues 28–813 (ASPRWEPQIA…HAAKEGRNVY (786 aa)) are Extracellular-facing. The segment at 30 to 133 (PRWEPQIAVL…KPFRCLGPFQ (104 aa)) is GFLD subdomain. The E1 domain occupies 30–199 (PRWEPQIAVL…SGVEFVCCPK (170 aa)). 6 cysteine pairs are disulfide-bonded: cysteine 40–cysteine 70, cysteine 81–cysteine 128, cysteine 106–cysteine 116, cysteine 143–cysteine 197, cysteine 154–cysteine 184, and cysteine 168–cysteine 196. The tract at residues 141–199 (EGCLFDHIHNASRCWPFVRWNQTGAAACQERGMQMRSFAMLLPCGISVFSGVEFVCCPK) is cuBD subdomain. Asparagine 150 and asparagine 161 each carry an N-linked (GlcNAc...) asparagine glycan. Disordered regions lie at residues 225–365 (NDEL…STPQ) and 377–396 (NSGNSGTGAGAPPSTAQPTS). Asparagine 237 and asparagine 240 each carry an N-linked (GlcNAc...) asparagine glycan. A compositionally biased stretch (acidic residues) spans 246 to 267 (NEDDLDDEDDLMGDDEEDDMVA). A compositionally biased stretch (low complexity) spans 268-292 (DEAATAGGSPNTGSSGDSNSGSLDD). The span at 293–321 (INAEYDSGEEGDNYEEDGAGSESEAEVEA) shows a compositional bias: acidic residues. Residues 329 to 352 (AKVVSLKSDSSSPSSAPVAPAPEK) show a composition bias toward low complexity. The E2 domain maps to 395–597 (TSDPYFTHFD…AKIAQLMNDY (203 aa)). Asparagine 574 carries N-linked (GlcNAc...) asparagine glycosylation. The interval 675-743 (KSQVAEQQSQ…TEYGEATVSS (69 aa)) is disordered. Low complexity predominate over residues 681–699 (QQSQPTQSSTQSQAQQQQQ). Residues 814-834 (FTLSFAGIALMAAVFVGVAVA) form a helical membrane-spanning segment. The Cytoplasmic segment spans residues 835-887 (KWRTSRSPHAQGFIEVDQNVTTHHPIVREEKIVPNMQINGYENPTYKYFEVKE). Positions 875–880 (YENPTY) match the YENPXY motif motif.

The protein belongs to the APP family. As to quaternary structure, interacts (via the intracellular domain, ICD) with APP-BP1. As to expression, expressed in postmitotic neurons in the central and peripheral nervous systems. Within the nervous system, transcripts are not observed in neuroblasts, newly generated neurons and at least one class of presumed glial cells.

It localises to the membrane. Functionally, during development, plays a role in the regulation of the neddylation pathway. Appl and APP-BP1 interact antagonistically during development. In Drosophila melanogaster (Fruit fly), this protein is Amyloid-beta-like protein (Appl).